A 1544-amino-acid chain; its full sequence is GATOR complex protein Iml1 (1544 aa).

Disordered stretches follow at residues 615–649 (QAVP…CENG) and 1037–1072 (RRHS…EKRP). Polar residues-rich tracts occupy residues 623-639 (QAGQ…NNNN) and 1041-1057 (TSII…TNSP). Positions 1058-1072 (FRERVGSNRLPEKRP) are enriched in basic and acidic residues.

This sequence belongs to the IML1 family. As to quaternary structure, component of the GATOR complex consisting of mio, Nup44A/Seh1, Im11, Nplr3, Nplr2, Wdr24, Wdr59 and Sec13. Within the GATOR complex, probable component of the GATOR1 subcomplex which is likely composed of Iml1, Nplr2 and Nplr3.

An essential component of the GATOR subcomplex GATOR1 which functions as an inhibitor of the amino acid-sensing branch of the TORC1 signaling pathway. The two GATOR subcomplexes, GATOR1 and GATOR2, regulate the TORC1 pathway in order to mediate metabolic homeostasis, female gametogenesis and the response to amino acid limitation and complete starvation. The function of GATOR1 in negatively regulating the TORC1 pathway is essential for maintaining baseline levels of TORC1 activity under nutrient rich conditions, and for promoting survival during amino acid or complete starvation by inhibiting TORC1-dependent cell growth and promoting catabolic metabolism and autophagy. GATOR1 and GATOR2 act at different stages of oogenesis to regulate TORC1 in order to control meiotic entry and promote oocyte growth and development. After exactly four mitotic cyst divisions, the GATOR1 complex members (Iml1, Nprl2 and Nprl3) down-regulate TORC1 to slow cellular metabolism and promote the mitotic/meiotic transition. At later stages of oogenesis, the mio and Nup44A components of the GATOR2 complex inhibit GATOR1 and thus activate TORC1 to promote meiotic progression, and drive oocyte growth and development. In Drosophila melanogaster (Fruit fly), this protein is GATOR complex protein Iml1.